Reading from the N-terminus, the 453-residue chain is Allantoinase (453 aa).

Histidine 59, histidine 61, lysine 146, histidine 186, histidine 242, and aspartate 315 together coordinate Zn(2+). Lysine 146 carries the N6-carboxylysine modification.

It belongs to the metallo-dependent hydrolases superfamily. Allantoinase family. Homotetramer. Zn(2+) is required as a cofactor. In terms of processing, carboxylation allows a single lysine to coordinate two zinc ions.

It carries out the reaction (S)-allantoin + H2O = allantoate + H(+). Its pathway is nitrogen metabolism; (S)-allantoin degradation; allantoate from (S)-allantoin: step 1/1. In terms of biological role, catalyzes the conversion of allantoin (5-ureidohydantoin) to allantoic acid by hydrolytic cleavage of the five-member hydantoin ring. In Salmonella choleraesuis (strain SC-B67), this protein is Allantoinase.